The following is a 171-amino-acid chain: RNA pyrophosphohydrolase (171 aa).

In terms of domain architecture, Nudix hydrolase spans 6–149 (GFRPNVGIIL…KREVYRRALK (144 aa)). The short motif at 39 to 60 (GGIKESESAEQALYRELQEEVG) is the Nudix box element.

It belongs to the Nudix hydrolase family. RppH subfamily. The cofactor is a divalent metal cation.

Its function is as follows. Accelerates the degradation of transcripts by removing pyrophosphate from the 5'-end of triphosphorylated RNA, leading to a more labile monophosphorylated state that can stimulate subsequent ribonuclease cleavage. The polypeptide is RNA pyrophosphohydrolase (Teredinibacter turnerae (strain ATCC 39867 / T7901)).